Here is a 252-residue protein sequence, read N- to C-terminus: C-X-C motif chemokine 16 (252 aa).

The signal sequence occupies residues 1–25 (MMLGRTSRLLLVLLFIAYATTSGNG). Topologically, residues 26–198 (NEGSKVGSCP…RGPQAGTSAT (173 aa)) are extracellular. 2 disulfide bridges follow: Cys34-Cys64 and Cys36-Cys78. 2 disordered regions span residues 115-145 (LPEP…QQPT) and 163-195 (TTTY…QAGT). The segment covering 125–145 (DTATTSQTYLPSTLQRTQQPT) has biased composition (polar residues). The span at 176 to 189 (PEAKENQKQLKENR) shows a compositional bias: basic and acidic residues. The chain crosses the membrane as a helical span at residues 199 to 219 (VPVLSLLAIVFILAGVLLYVV). The Cytoplasmic portion of the chain corresponds to 220–252 (CKRRKNQLLQHPPDLAASLYTCSRRTRAENGTL).

Belongs to the intercrine alpha (chemokine CxC) family. In terms of processing, glycosylated.

Its subcellular location is the membrane. Functionally, induces a strong chemotactic response. Induces calcium mobilization. Binds to CXCR6/Bonzo. Also acts as a scavenger receptor on macrophages, which specifically binds to OxLDL (oxidized low density lipoprotein), suggesting that it may be involved in pathophysiology such as atherogenesis. The polypeptide is C-X-C motif chemokine 16 (CXCL16) (Bos taurus (Bovine)).